A 211-amino-acid chain; its full sequence is 3-demethoxyubiquinol 3-hydroxylase (211 aa).

Positions 60, 90, 93, 142, 174, and 177 each coordinate Fe cation.

It belongs to the COQ7 family. Fe cation is required as a cofactor.

The protein localises to the cell membrane. It catalyses the reaction a 5-methoxy-2-methyl-3-(all-trans-polyprenyl)benzene-1,4-diol + AH2 + O2 = a 3-demethylubiquinol + A + H2O. It participates in cofactor biosynthesis; ubiquinone biosynthesis. Catalyzes the hydroxylation of 2-nonaprenyl-3-methyl-6-methoxy-1,4-benzoquinol during ubiquinone biosynthesis. This is 3-demethoxyubiquinol 3-hydroxylase from Francisella tularensis subsp. tularensis (strain FSC 198).